Reading from the N-terminus, the 509-residue chain is Probable aspartic-type endopeptidase CTSD (509 aa).

Positions 1–21 (MQFLWLCLLSAVTLQFTGTLA) are cleaved as a signal peptide. The Peptidase A1 domain occupies 102–408 (YFSEVKVGSE…DFDKNRVGLA (307 aa)). D120 is an active-site residue. N-linked (GlcNAc...) asparagine glycosylation is present at N174. Residue D302 is part of the active site. N361 is a glycosylation site (N-linked (GlcNAc...) asparagine). The segment at 451 to 489 (NKAPSGGSPGLPAESGSDSTTNGEATNGATSSPNSSSSV) is disordered. Over residues 466–480 (GSDSTTNGEATNGAT) the composition is skewed to polar residues. A glycan (N-linked (GlcNAc...) asparagine) is linked at N484. S485 carries GPI-anchor amidated serine lipidation. Positions 486–509 (SSSVLTPTWLTLAVFFAIGSSLWS) are cleaved as a propeptide — removed in mature form.

The protein belongs to the peptidase A1 family.

Its subcellular location is the cell membrane. Its function is as follows. Probable GPI-anchored aspartic-type endopeptidase which contributes to virulence. This chain is Probable aspartic-type endopeptidase CTSD (CTSD), found in Arthroderma benhamiae (strain ATCC MYA-4681 / CBS 112371) (Trichophyton mentagrophytes).